A 180-amino-acid polypeptide reads, in one-letter code: Large ribosomal subunit protein uL6 (180 aa).

It belongs to the universal ribosomal protein uL6 family. As to quaternary structure, part of the 50S ribosomal subunit.

Functionally, this protein binds to the 23S rRNA, and is important in its secondary structure. It is located near the subunit interface in the base of the L7/L12 stalk, and near the tRNA binding site of the peptidyltransferase center. The protein is Large ribosomal subunit protein uL6 of Christiangramia forsetii (strain DSM 17595 / CGMCC 1.15422 / KT0803) (Gramella forsetii).